The following is a 491-amino-acid chain: MTTALKVKTSSLPGSRLALEVGVPADRCKASYEAAVERLSRSVRLPGFRKGRVPKPVLLQQIGPLRVKASALEDLVDSVLRDAVEQEKVEVLGQPSLSGNFEELLEKFDPAKELVVTLEMDVAPTPTLKSTKGLSAEAESVAYDPARVDELLDQSRRQLATLVPVSDRAAAMGDVAVVSFSGVFSDDKSAIEGGSANGLDVELEEGRMISGFVEGVVGMKPGDKKDVDCQFPDDYPEETCRGRKALFSISLDELKGRELPELDDAFAQQASDKKTLSELREDLENRLKQDAEQRQKNNRHEALLKALVDQLEVELPESLIKEEINSLLQETAAQMAQQGMDVKKLFTPETVQNLAQASRGEATERLQRSLALKALAKAEGISVADKDLEAKIKEVSAGFSDTNKIDPQRLRDAVAEDLLRETLLSWLEENAKLTMVDPASEDKPAKASKAKSSKAKAEKEPAAEGQAKAKPAAKTSKSKTKAAEKLITPID.

In terms of domain architecture, PPIase FKBP-type spans 173 to 260; that stretch reads GDVAVVSFSG…LDELKGRELP (88 aa). The disordered stretch occupies residues 435-491; sequence MVDPASEDKPAKASKAKSSKAKAEKEPAAEGQAKAKPAAKTSKSKTKAAEKLITPID. The span at 463-475 shows a compositional bias: low complexity; the sequence is AEGQAKAKPAAKT.

Belongs to the FKBP-type PPIase family. Tig subfamily.

The protein resides in the cytoplasm. The enzyme catalyses [protein]-peptidylproline (omega=180) = [protein]-peptidylproline (omega=0). Involved in protein export. Acts as a chaperone by maintaining the newly synthesized protein in an open conformation. Functions as a peptidyl-prolyl cis-trans isomerase. The chain is Trigger factor from Synechococcus sp. (strain RCC307).